A 572-amino-acid chain; its full sequence is Periplasmic pectate lyase (572 aa).

The signal sequence occupies residues 1–23 (MKKRALLLSMSVLAMLYIPAGQA).

The protein belongs to the polysaccharide lyase 2 family.

The protein resides in the periplasm. It carries out the reaction Eliminative cleavage of (1-&gt;4)-alpha-D-galacturonan to give oligosaccharides with 4-deoxy-alpha-D-galact-4-enuronosyl groups at their non-reducing ends.. The protein operates within glycan metabolism; pectin degradation; 2-dehydro-3-deoxy-D-gluconate from pectin: step 2/5. In Yersinia pseudotuberculosis serotype I (strain IP32953), this protein is Periplasmic pectate lyase (pelY).